A 157-amino-acid polypeptide reads, in one-letter code: 2-C-methyl-D-erythritol 2,4-cyclodiphosphate synthase (157 aa).

Residues D8 and H10 each contribute to the a divalent metal cation site. Residues 8–10 and 34–35 contribute to the 4-CDP-2-C-methyl-D-erythritol 2-phosphate site; these read DVH and HS. H42 provides a ligand contact to a divalent metal cation. Residues 56–58, 132–135, and R142 each bind 4-CDP-2-C-methyl-D-erythritol 2-phosphate; these read DIG and TTNE.

The protein belongs to the IspF family. As to quaternary structure, homotrimer. A divalent metal cation serves as cofactor.

It catalyses the reaction 4-CDP-2-C-methyl-D-erythritol 2-phosphate = 2-C-methyl-D-erythritol 2,4-cyclic diphosphate + CMP. The protein operates within isoprenoid biosynthesis; isopentenyl diphosphate biosynthesis via DXP pathway; isopentenyl diphosphate from 1-deoxy-D-xylulose 5-phosphate: step 4/6. Its function is as follows. Involved in the biosynthesis of isopentenyl diphosphate (IPP) and dimethylallyl diphosphate (DMAPP), two major building blocks of isoprenoid compounds. Catalyzes the conversion of 4-diphosphocytidyl-2-C-methyl-D-erythritol 2-phosphate (CDP-ME2P) to 2-C-methyl-D-erythritol 2,4-cyclodiphosphate (ME-CPP) with a corresponding release of cytidine 5-monophosphate (CMP). This Pelodictyon phaeoclathratiforme (strain DSM 5477 / BU-1) protein is 2-C-methyl-D-erythritol 2,4-cyclodiphosphate synthase.